Consider the following 301-residue polypeptide: Immediate early response gene 5-like protein (301 aa).

This sequence belongs to the IER family.

This is Immediate early response gene 5-like protein (ier5l) from Danio rerio (Zebrafish).